An 871-amino-acid polypeptide reads, in one-letter code: Serrate RNA effector molecule homolog (871 aa).

Residues 1 to 90 form a disordered region; that stretch reads MGDSDDEYDR…RRDWDGHSSD (90 aa). Position 2 is an N-acetylglycine (Gly2). Ser4 carries the phosphoserine modification. Phosphotyrosine is present on Tyr8. Positions 8 to 73 are enriched in basic and acidic residues; that stretch reads YDRRRRDKFR…ERFSPPRHEL (66 aa). Phosphoserine is present on residues Ser67, Ser74, and Ser136. A Glycyl lysine isopeptide (Lys-Gly) (interchain with G-Cter in SUMO2) cross-link involves residue Lys150. A disordered region spans residues 272–411; the sequence is EEEEQAGKPG…KPKDAAGLEC (140 aa). Basic and acidic residues predominate over residues 297–347; sequence DGERKTNDKDEKKEDSKQAENDSSNDDKTKKSEGDGDKEEKKEDSEKEAKK. Acidic residues predominate over residues 370–385; that stretch reads SESESESGQAEEEKEE. Residues 386–411 show a composition bias toward basic and acidic residues; that stretch reads AEALKEKEKPKEEEWEKPKDAAGLEC. Phosphoserine occurs at positions 492 and 539. Residue Thr543 is modified to Phosphothreonine. Ser569 carries the post-translational modification Phosphoserine. The segment at 574-597 is disordered; that stretch reads ELLGSSGGAPPEEPPKEGNPAEIN. Thr670 carries the phosphothreonine modification. Ser678 carries the post-translational modification Phosphoserine. Omega-N-methylarginine is present on residues Arg828, Arg835, and Arg845. Residues 830 to 849 are disordered; it reads NYDAFRGQGGYPGKPRNRMV.

It belongs to the ARS2 family. In terms of assembly, interacts with CASP8AP2, ERBB4, NCBP1/CBP80 and DROSHA. Interacts with LUZP4. Interacts with NCBP2/CBP20 and NCBP3. Interacts with MTREX.

The protein localises to the nucleus. It localises to the nucleoplasm. The protein resides in the cytoplasm. Acts as a mediator between the cap-binding complex (CBC) and the primary microRNAs (miRNAs) processing machinery during cell proliferation. Contributes to the stability and delivery of capped primary miRNA transcripts to the primary miRNA processing complex containing DGCR8 and DROSHA, thereby playing a role in RNA-mediated gene silencing (RNAi) by miRNAs. Binds capped RNAs (m7GpppG-capped RNA); however interaction is probably mediated via its interaction with NCBP1/CBP80 component of the CBC complex. Involved in cell cycle progression at S phase. Does not directly confer arsenite resistance but rather modulates arsenic sensitivity. Independently of its activity on miRNAs, necessary and sufficient to promote neural stem cell self-renewal. Does so by directly binding SOX2 promoter and positively regulating its transcription. The protein is Serrate RNA effector molecule homolog (SRRT) of Pongo abelii (Sumatran orangutan).